The primary structure comprises 92 residues: MEIKSDHSEHGFQFPGTFELSAVGTAGKALETELPRLLARCGVELVQERISWKHSSTGKYVSVRISFRALDREQYDAAHQVLRDHPEVKWTL.

Belongs to the UPF0250 family.

This Xylella fastidiosa (strain 9a5c) protein is UPF0250 protein XF_1271.